Consider the following 219-residue polypeptide: Phosphoribosylformylglycinamidine synthase subunit PurQ (219 aa).

One can recognise a Glutamine amidotransferase type-1 domain in the interval 2-219; sequence KIAVITFPGS…KVVLDLILGS (218 aa). Residue cysteine 86 is the Nucleophile of the active site. Residues histidine 195 and glutamate 197 contribute to the active site.

As to quaternary structure, part of the FGAM synthase complex composed of 1 PurL, 1 PurQ and 2 PurS subunits.

The protein resides in the cytoplasm. It catalyses the reaction N(2)-formyl-N(1)-(5-phospho-beta-D-ribosyl)glycinamide + L-glutamine + ATP + H2O = 2-formamido-N(1)-(5-O-phospho-beta-D-ribosyl)acetamidine + L-glutamate + ADP + phosphate + H(+). The enzyme catalyses L-glutamine + H2O = L-glutamate + NH4(+). Its pathway is purine metabolism; IMP biosynthesis via de novo pathway; 5-amino-1-(5-phospho-D-ribosyl)imidazole from N(2)-formyl-N(1)-(5-phospho-D-ribosyl)glycinamide: step 1/2. In terms of biological role, part of the phosphoribosylformylglycinamidine synthase complex involved in the purines biosynthetic pathway. Catalyzes the ATP-dependent conversion of formylglycinamide ribonucleotide (FGAR) and glutamine to yield formylglycinamidine ribonucleotide (FGAM) and glutamate. The FGAM synthase complex is composed of three subunits. PurQ produces an ammonia molecule by converting glutamine to glutamate. PurL transfers the ammonia molecule to FGAR to form FGAM in an ATP-dependent manner. PurS interacts with PurQ and PurL and is thought to assist in the transfer of the ammonia molecule from PurQ to PurL. The protein is Phosphoribosylformylglycinamidine synthase subunit PurQ of Leptospira interrogans serogroup Icterohaemorrhagiae serovar copenhageni (strain Fiocruz L1-130).